We begin with the raw amino-acid sequence, 533 residues long: Flavin-containing monooxygenase 5 (533 aa).

The residue at position 5 (R5) is a Dimethylated arginine. Residues 10 to 14 (GAGAS), E33, and 41 to 42 (LW) each bind FAD. The residue at position 54 (S54) is a Phosphoserine. The residue at position 56 (Y56) is a Phosphotyrosine. Position 58 is a phosphoserine (S58). 62–63 (NT) lines the FAD pocket. Position 196 to 199 (196 to 199 (SGGD)) interacts with NADP(+). Residue S280 is modified to Phosphoserine. A Phosphothreonine modification is found at T284. The residue at position 401 (S401) is a Phosphoserine. The chain crosses the membrane as a helical span at residues 513–533 (LVTVRVLMLAVAFFAVILAYF).

It belongs to the FMO family. FAD is required as a cofactor. As to expression, expressed in liver (at protein level). Expressed in the mucosal epithelium of the gastrointestinal tract.

Its subcellular location is the microsome membrane. It is found in the endoplasmic reticulum membrane. It catalyses the reaction N,N-dimethylaniline + NADPH + O2 + H(+) = N,N-dimethylaniline N-oxide + NADP(+) + H2O. The catalysed reaction is NADPH + O2 + H(+) = H2O2 + NADP(+). It carries out the reaction heptan-2-one + NADPH + O2 + H(+) = pentyl acetate + NADP(+) + H2O. The enzyme catalyses octan-3-one + NADPH + O2 + H(+) = pentyl propanoate + NADP(+) + H2O. It catalyses the reaction octan-3-one + NADPH + O2 + H(+) = ethyl hexanoate + NADP(+) + H2O. The catalysed reaction is hexan-3-one + NADPH + O2 + H(+) = ethyl butanoate + NADP(+) + H2O. It carries out the reaction hexan-3-one + NADPH + O2 + H(+) = propyl propanoate + NADP(+) + H2O. The enzyme catalyses heptan-4-one + NADPH + O2 + H(+) = propyl butanoate + NADP(+) + H2O. It catalyses the reaction (2E)-geranial + NADPH + O2 + H(+) = (1E)-2,6-dimethylhepta-1,5-dien-1-yl formate + NADP(+) + H2O. The catalysed reaction is sulcatone + NADPH + O2 + H(+) = 4-methylpent-3-en-1-yl acetate + NADP(+) + H2O. Functionally, acts as a Baeyer-Villiger monooxygenase on a broad range of substrates. Catalyzes the insertion of an oxygen atom into a carbon-carbon bond adjacent to a carbonyl, which converts ketones to esters. Active on diverse carbonyl compounds, whereas soft nucleophiles are mostly non- or poorly reactive. In contrast with other forms of FMO it is non- or poorly active on 'classical' substrates such as drugs, pesticides, and dietary components containing soft nucleophilic heteroatoms. Able to oxidize drug molecules bearing a carbonyl group on an aliphatic chain, such as nabumetone and pentoxifylline. Also, in the absence of substrates, shows slow but yet significant NADPH oxidase activity. Acts as a positive modulator of cholesterol biosynthesis as well as glucose homeostasis, promoting metabolic aging via pleiotropic effects. The protein is Flavin-containing monooxygenase 5 of Mus musculus (Mouse).